A 371-amino-acid polypeptide reads, in one-letter code: Gamma-tocopherol methyltransferase, chloroplastic (371 aa).

The N-terminal 65 residues, 1–65 (MAAAPVFFPS…NSNRIASRLQ (65 aa)), are a transit peptide targeting the chloroplast. The segment at 153–162 (IVDVGCGIGG) is SAM motif I. Residues 216–224 (GQFDLVWSM) form an SAM motif II region. The segment at 243–252 (VAAPGATIII) is SAM motif III.

The protein belongs to the class I-like SAM-binding methyltransferase superfamily. gTMT family. Homodimer.

The protein localises to the plastid. Its subcellular location is the chloroplast inner membrane. It catalyses the reaction picrinine + S-adenosyl-L-methionine = ervincine + S-adenosyl-L-homocysteine + H(+). It participates in alkaloid biosynthesis; vindoline biosynthesis. Its function is as follows. S-adenosyl-L-methionine-dependent N-methyltransferase involved in the biosynthesis of biologically active monoterpenoid indole alkaloids (MIAs) natural products including vindoline. Inactive with picrinine as substrate. This is Gamma-tocopherol methyltransferase, chloroplastic from Catharanthus roseus (Madagascar periwinkle).